Consider the following 357-residue polypeptide: Alanine racemase (357 aa).

K35 acts as the Proton acceptor; specific for D-alanine in catalysis. K35 bears the N6-(pyridoxal phosphate)lysine mark. Residue R130 coordinates substrate. The Proton acceptor; specific for L-alanine role is filled by Y255. A substrate-binding site is contributed by M303.

The protein belongs to the alanine racemase family. Pyridoxal 5'-phosphate is required as a cofactor.

It catalyses the reaction L-alanine = D-alanine. It functions in the pathway amino-acid biosynthesis; D-alanine biosynthesis; D-alanine from L-alanine: step 1/1. Functionally, catalyzes the interconversion of L-alanine and D-alanine. May also act on other amino acids. In Nitrosospira multiformis (strain ATCC 25196 / NCIMB 11849 / C 71), this protein is Alanine racemase (alr).